A 383-amino-acid chain; its full sequence is S-adenosylmethionine synthase (383 aa).

An ATP-binding site is contributed by histidine 22. Position 24 (aspartate 24) interacts with Mg(2+). Glutamate 50 is a binding site for K(+). The L-methionine site is built by glutamate 63 and glutamine 99. A flexible loop region spans residues 99-109; it reads QSLEINQAVLK. ATP-binding positions include 160–162, aspartate 235, 241–242, serine 258, and lysine 262; these read DMK and RK. An L-methionine-binding site is contributed by aspartate 235. Lysine 266 contributes to the L-methionine binding site.

This sequence belongs to the AdoMet synthase family. As to quaternary structure, homotetramer; dimer of dimers. Mg(2+) serves as cofactor. K(+) is required as a cofactor.

It localises to the cytoplasm. It carries out the reaction L-methionine + ATP + H2O = S-adenosyl-L-methionine + phosphate + diphosphate. Its pathway is amino-acid biosynthesis; S-adenosyl-L-methionine biosynthesis; S-adenosyl-L-methionine from L-methionine: step 1/1. Catalyzes the formation of S-adenosylmethionine (AdoMet) from methionine and ATP. The overall synthetic reaction is composed of two sequential steps, AdoMet formation and the subsequent tripolyphosphate hydrolysis which occurs prior to release of AdoMet from the enzyme. The polypeptide is S-adenosylmethionine synthase (Mycoplasma genitalium (strain ATCC 33530 / DSM 19775 / NCTC 10195 / G37) (Mycoplasmoides genitalium)).